Reading from the N-terminus, the 244-residue chain is Triosephosphate isomerase (244 aa).

Substrate is bound at residue 9–11 (NWK). Residue H93 is the Electrophile of the active site. E160 serves as the catalytic Proton acceptor. Residues G166 and S206 each coordinate substrate.

Belongs to the triosephosphate isomerase family. As to quaternary structure, homodimer.

The protein resides in the cytoplasm. The catalysed reaction is D-glyceraldehyde 3-phosphate = dihydroxyacetone phosphate. Its pathway is carbohydrate biosynthesis; gluconeogenesis. The protein operates within carbohydrate degradation; glycolysis; D-glyceraldehyde 3-phosphate from glycerone phosphate: step 1/1. Its function is as follows. Involved in the gluconeogenesis. Catalyzes stereospecifically the conversion of dihydroxyacetone phosphate (DHAP) to D-glyceraldehyde-3-phosphate (G3P). The protein is Triosephosphate isomerase of Mycoplasma pneumoniae (strain ATCC 29342 / M129 / Subtype 1) (Mycoplasmoides pneumoniae).